The following is a 291-amino-acid chain: D-alanyl-D-alanine carboxypeptidase (291 aa).

Positions 1 to 29 (MRLRRAAATVITTGALLAAGTLGATPATA) are cleaved as a signal peptide. Ser-64 acts as the Acyl-ester intermediate in catalysis. Residue Lys-67 is the Proton acceptor of the active site. The active site involves Ser-125. Lys-242 is a substrate binding site.

This sequence belongs to the peptidase S11 family.

The protein resides in the secreted. The catalysed reaction is Preferential cleavage: (Ac)2-L-Lys-D-Ala-|-D-Ala. Also transpeptidation of peptidyl-alanyl moieties that are N-acyl substituents of D-alanine.. It functions in the pathway cell wall biogenesis; peptidoglycan biosynthesis. Its function is as follows. Removes C-terminal D-alanyl residues from sugar-peptide cell wall precursors. This chain is D-alanyl-D-alanine carboxypeptidase, found in Streptomyces sp. (strain K15).